The following is an 84-amino-acid chain: UPF0248 protein Pisl_1919 (84 aa).

This sequence belongs to the UPF0248 family.

The chain is UPF0248 protein Pisl_1919 from Pyrobaculum islandicum (strain DSM 4184 / JCM 9189 / GEO3).